The sequence spans 200 residues: Adenylate kinase (200 aa).

10-15 lines the ATP pocket; that stretch reads GAGKGT. Residues 30–59 are NMP; that stretch reads STGDLFRANISQQTELGKLAKSYMDAGNLV. AMP-binding positions include Thr31, Arg36, 57-59, 84-87, and Gln91; these read NLV and GFPR. The LID stretch occupies residues 125–163; sequence GRRVCRNDSAHVFHVTYTPPKKEGVCDVCGGELYQRDDD. ATP-binding positions include Arg126 and 136–137; that span reads VF. Positions 160 and 171 each coordinate AMP.

Belongs to the adenylate kinase family. In terms of assembly, monomer.

It is found in the cytoplasm. The catalysed reaction is AMP + ATP = 2 ADP. Its pathway is purine metabolism; AMP biosynthesis via salvage pathway; AMP from ADP: step 1/1. Functionally, catalyzes the reversible transfer of the terminal phosphate group between ATP and AMP. Plays an important role in cellular energy homeostasis and in adenine nucleotide metabolism. This chain is Adenylate kinase, found in Streptomyces lividans.